Here is a 278-residue protein sequence, read N- to C-terminus: MSPLIVGTLIIILLSGLATAFYVTWQGRLICAGVGLILEQAYEGGQMFNTLMAHCFETYNGVEKSGTQCVADWLKVGLLAVTFGAGGPRLVNTLGGTFLTSPTAKRSNLYCDDFTGADYFSCELETLRPYTLMRKSLPYGNIHDVWINTTDTHQMIGVHMTLNGTDMIHYYNKTYVINYSGLKLNSSAINKRSYFYPQDSFLVSHAEWQDGNGIWTDTDYFAAMADCDFLGQNLGFWLASSYPNAYKWETQLWRTVGINLNGNIIYPGQLIMQTFNGS.

Positions 1–20 (MSPLIVGTLIIILLSGLATA) are cleaved as a signal peptide. Gly-96 is lipidated: GPI-anchor amidated glycine. Residues 97 to 278 (TFLTSPTAKR…QLIMQTFNGS (182 aa)) constitute a propeptide, removed in mature form.

The protein localises to the cell membrane. This is an uncharacterized protein from Schizosaccharomyces pombe (strain 972 / ATCC 24843) (Fission yeast).